We begin with the raw amino-acid sequence, 1155 residues long: DNA-directed RNA polymerase subunit beta (1155 aa).

It belongs to the RNA polymerase beta chain family. The RNAP catalytic core consists of 2 alpha, 1 beta, 1 beta' and 1 omega subunit. When a sigma factor is associated with the core the holoenzyme is formed, which can initiate transcription.

It carries out the reaction RNA(n) + a ribonucleoside 5'-triphosphate = RNA(n+1) + diphosphate. Functionally, DNA-dependent RNA polymerase catalyzes the transcription of DNA into RNA using the four ribonucleoside triphosphates as substrates. This chain is DNA-directed RNA polymerase subunit beta, found in Borrelia recurrentis (strain A1).